Consider the following 216-residue polypeptide: Thiopurine S-methyltransferase (216 aa).

4 residues coordinate S-adenosyl-L-methionine: W10, L45, E66, and R123.

Belongs to the class I-like SAM-binding methyltransferase superfamily. TPMT family.

It localises to the cytoplasm. It carries out the reaction S-adenosyl-L-methionine + a thiopurine = S-adenosyl-L-homocysteine + a thiopurine S-methylether.. The protein is Thiopurine S-methyltransferase of Pseudomonas entomophila (strain L48).